The primary structure comprises 105 residues: Small cysteine and glycine repeat-containing protein 4 (105 aa).

The tract at residues 4–87 (CGCGSCGGCG…RRTCGSCGCG (84 aa)) is 14 X 2 AA repeats of CG.

This sequence belongs to the KRTAP type 28 family.

In terms of biological role, in the hair cortex, hair keratin intermediate filaments are embedded in an interfilamentous matrix, consisting of hair keratin-associated proteins (KRTAP), which are essential for the formation of a rigid and resistant hair shaft through their extensive disulfide bond cross-linking with abundant cysteine residues of hair keratins. The matrix proteins include the high-sulfur and high-glycine-tyrosine keratins. The sequence is that of Small cysteine and glycine repeat-containing protein 4 from Homo sapiens (Human).